A 144-amino-acid polypeptide reads, in one-letter code: uncharacterized protein (144 aa).

This is an uncharacterized protein from Archaeoglobus fulgidus (strain ATCC 49558 / DSM 4304 / JCM 9628 / NBRC 100126 / VC-16).